A 1693-amino-acid polypeptide reads, in one-letter code: Serine protease filzig (1693 aa).

The Cytoplasmic segment spans residues 1-47; that stretch reads MFKWVTPASTATLSRCTLPATTAATTTTTAMAATRTATTTTRTTRPQ. The helical; Signal-anchor for type II membrane protein transmembrane segment at 48–68 threads the bilayer; it reads LLSIALTSLIIIVASFVPTTS. Over 69–1693 the chain is Extracellular; the sequence is GFRSIETNGG…PWLRSITGVK (1625 aa). Disordered regions lie at residues 170–198, 212–321, 352–465, and 477–524; these read QQSA…QQPS, QQLD…NDDF, GLQD…THPG, and STGY…TTVS. Composition is skewed to polar residues over residues 178-198 and 212-222; these read FESY…QQPS and QQLDSSSSISP. Low complexity-rich tracts occupy residues 230–241 and 252–268; these read EPQQQEYQSESE and TSSS…SSAS. Polar residues predominate over residues 274-294; it reads EPSQPADASNDQTTQKINKQP. Composition is skewed to low complexity over residues 358–404, 422–431, and 488–501; these read SSES…PTQK, QQKPQQVAKP, and EPPK…PAEQ. Positions 502-524 are enriched in polar residues; sequence SYISSSTSAKRPTTGHNSPTTVS. N-linked (GlcNAc...) asparagine glycosylation is found at asparagine 541 and asparagine 582. Disordered stretches follow at residues 615–635, 752–1007, and 1057–1090; these read QDAS…PGYG, HYNP…PPAT, and YAHR…TVLI. Positions 771 to 799 are enriched in polar residues; sequence SVSSHTTKVQEQMDETSNGYQQSETTSGY. The segment covering 836-847 has biased composition (basic residues); that stretch reads PRPKPSTKRPAV. Polar residues-rich tracts occupy residues 951–962 and 989–1000; these read QYDQPSAPSASY and KPISTSYVTGPS. N-linked (GlcNAc...) asparagine glycosylation is found at asparagine 1215 and asparagine 1272. Composition is skewed to low complexity over residues 1297–1307, 1331–1353, and 1362–1376; these read PVRTATTTRPK, TTTR…TTRR, and RVSS…SSAR. The segment at 1297 to 1435 is disordered; sequence PVRTATTTRP…TPNLAFHSPS (139 aa). Positions 1380-1391 are enriched in acidic residues; it reads DEIVDEEDEEDV. A Peptidase S1 domain is found at 1449–1691; the sequence is IVGGKGSTFG…YKPWLRSITG (243 aa). Cysteines 1480 and 1496 form a disulfide. Active-site charge relay system residues include histidine 1495 and aspartate 1544. Intrachain disulfides connect cysteine 1608-cysteine 1627 and cysteine 1638-cysteine 1667. Serine 1642 serves as the catalytic Charge relay system.

The protein belongs to the peptidase S1 family.

The protein resides in the cell membrane. Its function is as follows. Probable endopeptidase. In tracheal terminal cells, acts downstream of ich to regulate seamless tube growth and/or maintenance probably by processing lumenal matrix proteins. In Drosophila melanogaster (Fruit fly), this protein is Serine protease filzig.